The sequence spans 247 residues: tRNA pseudouridine synthase A (247 aa).

Aspartate 52 acts as the Nucleophile in catalysis. Substrate is bound at residue tyrosine 111.

This sequence belongs to the tRNA pseudouridine synthase TruA family. In terms of assembly, homodimer.

The catalysed reaction is uridine(38/39/40) in tRNA = pseudouridine(38/39/40) in tRNA. Functionally, formation of pseudouridine at positions 38, 39 and 40 in the anticodon stem and loop of transfer RNAs. This Erythrobacter litoralis (strain HTCC2594) protein is tRNA pseudouridine synthase A.